The following is a 392-amino-acid chain: MVDQLEDSVIETNYDEVIDTFDDMNLKPELLRGIYAYGFERPSAIQQRAIMPILGERDVLAQAQSGTGKTATFSISVLQKIDTSLKQCQALILAPTRELAQQIQKVVVALGDLMNVECHACIGGTLVRDDMAALQAGVHVVVGTPGRVHDMIQRRALPTDAVQMFVLDEADEMLSRGFKDQIYDIFQLLPPTAQVVLLSATMPQDVLEVTTKFMRDPIRILVKKDELTLEGIKQFYVAVEKEEWKLDTLCDLYETVTVTQAVIFCNTRRKVDWLTEQLTERDFTVSSMHGDMDQAQRDTLMHEFRTGSSRILITTDLLARGIDVQQVSLVINYDLPANRENYIHRIGRGGRFGRKGVSINFVTNDDVRMMREIEQFYNTHIEEMPMNIADLI.

A Q motif motif is present at residues 19 to 47 (DTFDDMNLKPELLRGIYAYGFERPSAIQQ). A Helicase ATP-binding domain is found at 50–220 (IMPILGERDV…TKFMRDPIRI (171 aa)). 63 to 70 (AQSGTGKT) is a binding site for ATP. The residue at position 65 (S65) is a Phosphoserine. Residues 168–171 (DEAD) carry the DEAD box motif. Positions 231-392 (GIKQFYVAVE…EMPMNIADLI (162 aa)) constitute a Helicase C-terminal domain.

The protein belongs to the DEAD box helicase family. eIF4A subfamily. As to quaternary structure, component of the eIF4F complex, which composition varies with external and internal environmental conditions. It is composed of at least eIF4A, eIF4E and eIF4G.

It is found in the cytoplasm. It carries out the reaction ATP + H2O = ADP + phosphate + H(+). In terms of biological role, ATP-dependent RNA helicase which is a subunit of the eIF4F complex involved in cap recognition and is required for mRNA binding to ribosome. In the current model of translation initiation, eIF4A unwinds RNA secondary structures in the 5'-UTR of mRNAs which is necessary to allow efficient binding of the small ribosomal subunit, and subsequent scanning for the initiator codon. In Schizosaccharomyces pombe (strain 972 / ATCC 24843) (Fission yeast), this protein is ATP-dependent RNA helicase eIF4A (tif1).